The sequence spans 664 residues: MSETLSRHRQLCDLLTEYGHQYYVLDNPTVPDAEYDRLMRELIAIESEHPELKTSASPSVRVGGQPLTAFRQVRHEIPMLSLDNVFSSEELQAFEQRMKDRLKREISFTFCCEPKLDGLAVSLLYVDGQLVQAATRGDGATGEEITENVRTIKAIPLSLRGSDWPARLEVRGEVFMPKAGFEAMNAKALAAGEKVFVNPRNAAAGSLRQLDSRITASRPLNFYAYGVGVGGDQLGDSHFGRLCQLKAWGLPMSPEVKLKEGAAGCQAFHDDILARRGELAYEIDGVVYKVDAIPLQEELGFVARAPRWATAHKFPAQEEMTLLENVEFQVGRTGAVTPVAKLKPVFVGGVTISNATLHNADEIERLGVMIGDTVIVRRAGDVIPQIVAVVEAQRPVDAREILFPTQCPVCGSALERLEGEVVTRCSGGLFCEAQRKEAIKHFAARRAMDVDGLGDKIVEQLVDKGLVKTPADLFSLNAIQLAGLERMGQKSALNLVAAIDAARSTTLPRFLFALGIREVGEATALNLANHFLTLDALRAASVEQLLEVADVGDIVAKHVYYFLRQPHNIEVLAAGIHWPAIEKKEASEQPFAGKTFVLTGTLNLLSRNDAKAALQALGAKVAGSVSAKTDVLVAGEAAGSKLAKAQELGITIWTEEQLQAALQS.

NAD(+) is bound by residues Asp32–Asp36, Ser81–Leu82, and Glu113. Lys115 functions as the N6-AMP-lysine intermediate in the catalytic mechanism. Arg136, Glu173, Lys289, and Lys313 together coordinate NAD(+). 4 residues coordinate Zn(2+): Cys407, Cys410, Cys425, and Cys431. Positions Ala586 to Ser664 constitute a BRCT domain.

This sequence belongs to the NAD-dependent DNA ligase family. LigA subfamily. Requires Mg(2+) as cofactor. It depends on Mn(2+) as a cofactor.

It catalyses the reaction NAD(+) + (deoxyribonucleotide)n-3'-hydroxyl + 5'-phospho-(deoxyribonucleotide)m = (deoxyribonucleotide)n+m + AMP + beta-nicotinamide D-nucleotide.. DNA ligase that catalyzes the formation of phosphodiester linkages between 5'-phosphoryl and 3'-hydroxyl groups in double-stranded DNA using NAD as a coenzyme and as the energy source for the reaction. It is essential for DNA replication and repair of damaged DNA. The polypeptide is DNA ligase (Aeromonas salmonicida (strain A449)).